The sequence spans 500 residues: L-arabinose isomerase (500 aa).

Mn(2+) is bound by residues E306, E333, H350, and H450.

The protein belongs to the arabinose isomerase family. Homohexamer. Mn(2+) is required as a cofactor.

It catalyses the reaction beta-L-arabinopyranose = L-ribulose. It participates in carbohydrate degradation; L-arabinose degradation via L-ribulose; D-xylulose 5-phosphate from L-arabinose (bacterial route): step 1/3. Functionally, catalyzes the conversion of L-arabinose to L-ribulose. The protein is L-arabinose isomerase of Escherichia coli O139:H28 (strain E24377A / ETEC).